The following is a 474-amino-acid chain: Glycogen synthase (474 aa).

ADP-alpha-D-glucose is bound at residue Lys15.

The protein belongs to the glycosyltransferase 1 family. Bacterial/plant glycogen synthase subfamily.

It catalyses the reaction [(1-&gt;4)-alpha-D-glucosyl](n) + ADP-alpha-D-glucose = [(1-&gt;4)-alpha-D-glucosyl](n+1) + ADP + H(+). It participates in glycan biosynthesis; glycogen biosynthesis. In terms of biological role, synthesizes alpha-1,4-glucan chains using ADP-glucose. This chain is Glycogen synthase, found in Chlamydia trachomatis serovar D (strain ATCC VR-885 / DSM 19411 / UW-3/Cx).